A 388-amino-acid chain; its full sequence is Succinate--CoA ligase [ADP-forming] subunit beta (388 aa).

The region spanning 9-244 (KQLFAEYGLP…PSQDDAREAH (236 aa)) is the ATP-grasp domain. Residues K46, 53-55 (GRG), E99, T102, and E107 each bind ATP. Mg(2+) contacts are provided by N199 and D213. Substrate contacts are provided by residues N264 and 321–323 (GIV).

It belongs to the succinate/malate CoA ligase beta subunit family. As to quaternary structure, heterotetramer of two alpha and two beta subunits. Requires Mg(2+) as cofactor.

It catalyses the reaction succinate + ATP + CoA = succinyl-CoA + ADP + phosphate. The catalysed reaction is GTP + succinate + CoA = succinyl-CoA + GDP + phosphate. The protein operates within carbohydrate metabolism; tricarboxylic acid cycle; succinate from succinyl-CoA (ligase route): step 1/1. Its function is as follows. Succinyl-CoA synthetase functions in the citric acid cycle (TCA), coupling the hydrolysis of succinyl-CoA to the synthesis of either ATP or GTP and thus represents the only step of substrate-level phosphorylation in the TCA. The beta subunit provides nucleotide specificity of the enzyme and binds the substrate succinate, while the binding sites for coenzyme A and phosphate are found in the alpha subunit. The chain is Succinate--CoA ligase [ADP-forming] subunit beta from Pseudomonas aeruginosa (strain LESB58).